The chain runs to 274 residues: NADPH-dependent 7-cyano-7-deazaguanine reductase (274 aa).

80–82 (VES) is a substrate binding site. 82-83 (SK) lines the NADPH pocket. Residue cysteine 181 is the Thioimide intermediate of the active site. The Proton donor role is filled by aspartate 188. 220 to 221 (HE) is a substrate binding site. NADPH is bound at residue 249–250 (RG).

The protein belongs to the GTP cyclohydrolase I family. QueF type 2 subfamily. Homodimer.

It is found in the cytoplasm. The catalysed reaction is 7-aminomethyl-7-carbaguanine + 2 NADP(+) = 7-cyano-7-deazaguanine + 2 NADPH + 3 H(+). It participates in tRNA modification; tRNA-queuosine biosynthesis. In terms of biological role, catalyzes the NADPH-dependent reduction of 7-cyano-7-deazaguanine (preQ0) to 7-aminomethyl-7-deazaguanine (preQ1). The protein is NADPH-dependent 7-cyano-7-deazaguanine reductase of Paraburkholderia phymatum (strain DSM 17167 / CIP 108236 / LMG 21445 / STM815) (Burkholderia phymatum).